The following is a 400-amino-acid chain: Enoyl-[acyl-carrier-protein] reductase [NADH] (400 aa).

NAD(+) is bound by residues 48 to 53 (GSSSGY), 74 to 75 (FE), 111 to 112 (DA), and 139 to 140 (LA). Tyr225 lines the substrate pocket. The active-site Proton donor is the Tyr235. NAD(+) is bound by residues Lys244 and 273 to 275 (VVT).

The protein belongs to the TER reductase family. Monomer.

It catalyses the reaction a 2,3-saturated acyl-[ACP] + NAD(+) = a (2E)-enoyl-[ACP] + NADH + H(+). It functions in the pathway lipid metabolism; fatty acid biosynthesis. Functionally, involved in the final reduction of the elongation cycle of fatty acid synthesis (FAS II). Catalyzes the reduction of a carbon-carbon double bond in an enoyl moiety that is covalently linked to an acyl carrier protein (ACP). The protein is Enoyl-[acyl-carrier-protein] reductase [NADH] of Aliivibrio fischeri (strain ATCC 700601 / ES114) (Vibrio fischeri).